Reading from the N-terminus, the 144-residue chain is UPF0102 protein BTH_I3148 (144 aa).

The interval 1 to 20 (MCHARAARQATGEAEAAPRD) is disordered.

The protein belongs to the UPF0102 family.

The chain is UPF0102 protein BTH_I3148 from Burkholderia thailandensis (strain ATCC 700388 / DSM 13276 / CCUG 48851 / CIP 106301 / E264).